The chain runs to 701 residues: Ephexin-1 (701 aa).

2 stretches are compositionally biased toward basic and acidic residues: residues 1–11 and 26–48; these read METKNSEDQGK and GPAE…EEPR. The interval 1 to 141 is disordered; the sequence is METKNSEDQG…TPEECPALTD (141 aa). The tract at residues 1-264 is regulatory region; modulates activity toward RHOA, RAC1 and CDC42; it reads METKNSEDQG…LDILQPEETK (264 aa). A compositionally biased stretch (polar residues) spans 120 to 132; sequence ASESSSTPGNGTT. Phosphotyrosine is present on Y172. The tract at residues 187 to 226 is disordered; that stretch reads RRQQDAEIQGNSDGSQAGEDNAEEEEEEEEEPASPPERRA. Over residues 206-218 the composition is skewed to acidic residues; it reads DNAEEEEEEEEEP. Residues 264-448 form the DH domain; sequence KLQEAMFELV…EMVVKACNEG (185 aa). Residues 480–592 form the PH domain; the sequence is WLLKQGELQQ…WMTSLAPNRR (113 aa). The SH3 domain maps to 603–664; the sequence is LDCPQVQCVH…PSSMTEEILN (62 aa). Positions 679–690 are enriched in basic and acidic residues; sequence HKMEDPQRSQNK. Residues 679-701 are disordered; that stretch reads HKMEDPQRSQNKDRRKLGSRNRQ. A compositionally biased stretch (basic residues) spans 691 to 701; it reads DRRKLGSRNRQ.

As to quaternary structure, interacts with CDK5R1 and EPHA4; activated by EPHA4 through the CDK5 kinase. Phosphorylation by CDK5 upon EPHA4 activation by EFNA1 may regulate dendritic spine morphogenesis. Src-dependent phosphorylation at Tyr-172 upon EPHA4 activation increases the guanine exchange factor activity toward RHOA. Expressed in telencephalic neurons (at protein level). Expressed in brain, spinal cord and testis.

Its subcellular location is the cytoplasm. It localises to the membrane. The protein resides in the cell projection. It is found in the growth cone. In terms of biological role, acts as a guanine nucleotide exchange factor (GEF) which differentially activates the GTPases RHOA, RAC1 and CDC42. Plays a role in axon guidance regulating ephrin-induced growth cone collapse and dendritic spine morphogenesis. Upon activation by ephrin through EPHA4, the GEF activity switches toward RHOA resulting in its activation. Activated RHOA promotes cone retraction at the expense of RAC1- and CDC42-stimulated growth cone extension. This chain is Ephexin-1 (Ngef), found in Rattus norvegicus (Rat).